A 115-amino-acid polypeptide reads, in one-letter code: U17-barytoxin-Tl1c (115 aa).

Residues 1-20 (MKTIIVFLSLLVLATKFGDA) form the signal peptide. Residues 21–74 (KEGVNQKQKKEVTQNEFREEYLNEMAAMSLVQQLEAIERALFENEAGRNSRQKR) constitute a propeptide that is removed on maturation. Disulfide bonds link Cys-75–Cys-89, Cys-82–Cys-94, and Cys-88–Cys-109.

Belongs to the neurotoxin 14 (magi-1) family. 03 (ICK-30-40) subfamily. In terms of tissue distribution, expressed by the venom gland.

The protein localises to the secreted. Functionally, ion channel inhibitor. This chain is U17-barytoxin-Tl1c, found in Trittame loki (Brush-footed trapdoor spider).